A 722-amino-acid polypeptide reads, in one-letter code: 1,4-alpha-glucan branching enzyme GlgB (722 aa).

The Nucleophile role is filled by aspartate 401. Glutamate 454 functions as the Proton donor in the catalytic mechanism.

Belongs to the glycosyl hydrolase 13 family. GlgB subfamily. Monomer.

It catalyses the reaction Transfers a segment of a (1-&gt;4)-alpha-D-glucan chain to a primary hydroxy group in a similar glucan chain.. The protein operates within glycan biosynthesis; glycogen biosynthesis. Catalyzes the formation of the alpha-1,6-glucosidic linkages in glycogen by scission of a 1,4-alpha-linked oligosaccharide from growing alpha-1,4-glucan chains and the subsequent attachment of the oligosaccharide to the alpha-1,6 position. This Rubrobacter xylanophilus (strain DSM 9941 / JCM 11954 / NBRC 16129 / PRD-1) protein is 1,4-alpha-glucan branching enzyme GlgB.